The chain runs to 564 residues: Kelch-like protein 12 (564 aa).

In terms of domain architecture, BTB spans 29 to 96; it reads CDITLRVEGT…VYTETVLVTV (68 aa). The 102-residue stretch at 131–232 folds into the BACK domain; sequence CLGIRDFAET…LTPRYITDVI (102 aa). Kelch repeat units lie at residues 278-325, 327-375, 376-422, 423-469, 471-516, and 518-563; these read VLLV…ALND, VYVI…TLGD, MIYV…VASG, LIYC…LLND, IYVV…VLRG, and LYAI…VLRE.

In terms of assembly, component of the BCR(KLHL12) E3 ubiquitin ligase complex.

It is found in the cytoplasmic vesicle. The protein localises to the COPII-coated vesicle. It participates in protein modification; protein ubiquitination. In terms of biological role, substrate-specific adapter of a BCR (BTB-CUL3-RBX1) E3 ubiquitin ligase complex that acts as a negative regulator of Wnt signaling pathway and ER-Golgi transport. The BCR(KLHL12) complex is involved in ER-Golgi transport by regulating the size of COPII coats, thereby playing a key role in collagen export, which is required for embryonic stem (ES) cells division. Negatively regulates the Wnt signaling pathway, possibly via the targeted ubiquitination and subsequent proteolysis of dvl2 and dvl3. Regulates convergent-extension movements during early embryonic development. The protein is Kelch-like protein 12 (klhl12) of Danio rerio (Zebrafish).